The sequence spans 608 residues: Chaperone protein HtpG (608 aa).

The a; substrate-binding stretch occupies residues 1-332 (MQFQTEVNQL…VEDLPLNVSR (332 aa)). The interval 333–536 (EILQENQILK…KNKPDFAMQQ (204 aa)) is b. Residues 537 to 608 (LLKQMGQEQN…LTKIINKAFS (72 aa)) form a c region.

Belongs to the heat shock protein 90 family. In terms of assembly, homodimer.

The protein resides in the cytoplasm. Molecular chaperone. Has ATPase activity. This Campylobacter jejuni subsp. jejuni serotype O:2 (strain ATCC 700819 / NCTC 11168) protein is Chaperone protein HtpG.